The following is a 275-amino-acid chain: 2,3,4,5-tetrahydropyridine-2,6-dicarboxylate N-succinyltransferase (275 aa).

The protein belongs to the transferase hexapeptide repeat family.

The protein resides in the cytoplasm. The catalysed reaction is (S)-2,3,4,5-tetrahydrodipicolinate + succinyl-CoA + H2O = (S)-2-succinylamino-6-oxoheptanedioate + CoA. It functions in the pathway amino-acid biosynthesis; L-lysine biosynthesis via DAP pathway; LL-2,6-diaminopimelate from (S)-tetrahydrodipicolinate (succinylase route): step 1/3. The chain is 2,3,4,5-tetrahydropyridine-2,6-dicarboxylate N-succinyltransferase from Burkholderia ambifaria (strain MC40-6).